Here is a 79-residue protein sequence, read N- to C-terminus: RNA-binding protein Hfq (79 aa).

Residues Asp10–Val69 enclose the Sm domain.

This sequence belongs to the Hfq family. Homohexamer.

Functionally, RNA chaperone that binds small regulatory RNA (sRNAs) and mRNAs to facilitate mRNA translational regulation in response to envelope stress, environmental stress and changes in metabolite concentrations. Also binds with high specificity to tRNAs. This Burkholderia cenocepacia (strain HI2424) protein is RNA-binding protein Hfq.